A 408-amino-acid polypeptide reads, in one-letter code: Mitochondrial outer membrane protein SLC25A46 (408 aa).

Disordered stretches follow at residues 1 to 23 and 52 to 80; these read MHPRRPEGFDGLGYRGGGREEPC and HWGEKTPPYGAGTPLGAAGLNEEPGLGAG. A compositionally biased stretch (low complexity) spans 66 to 76; that stretch reads LGAAGLNEEPG. A Solcar 1 repeat occupies 86–177; sequence QLNRFAGFGI…GIISEFTPLP (92 aa). 6 helical membrane-spanning segments follow: residues 93-113, 157-177, 189-209, 248-268, 304-324, and 373-393; these read FGIGLASLFTENVLAHPCIVL, FIVQGITLGTEGIISEFTPLP, IGGHLLLKGLTHVIAMPFYSA, LLPLMVLIFPTALHGVLHYVI, FPELIASFAASLCADVMLYPL, and LGFYKGFGAVVVQYTLHVAVL. The Solcar 2 repeat unit spans residues 301 to 403; sequence DAYFPELIAS…QLTKIIYSTL (103 aa).

Belongs to the mitochondrial carrier (TC 2.A.29) family.

It is found in the mitochondrion outer membrane. Its function is as follows. Transmembrane protein of the mitochondrial outer membrane that controls mitochondrial organization. May regulate the assembly of the MICOS (mitochondrial contact site and cristae organizing system) complex which is essential to the biogenesis and dynamics of mitochondrial cristae, the inwards folds of the inner mitochondrial membrane. Through its interaction with the EMC (endoplasmic reticulum membrane protein complex), could regulate mitochondrial lipid homeostasis and thereby mitochondrial fission. This chain is Mitochondrial outer membrane protein SLC25A46, found in Gallus gallus (Chicken).